A 310-amino-acid chain; its full sequence is Basic salivary proline-rich protein 4 (310 aa).

An N-terminal signal peptide occupies residues 1–16 (MLLILLSVALLALSSA). Positions 14-310 (SSAESSSEDV…RPAQGQQPPQ (297 aa)) are disordered. Repeat copies occupy residues 35–55 (KPEG…PPPG), 56–76 (KPQG…PPPG), 77–97 (KPEG…PHPG), 98–118 (KPER…PHPG), 119–139 (KPES…PTPG), 140–160 (KPEG…PPPG), 161–181 (KPEG…PHPG), 182–202 (KPER…PPPG), and 203–223 (KPER…PHPG). Residues 35–234 (KPEGRRPQGG…PEGPPPQEGN (200 aa)) are 9.5 X 21 AA tandem repeats of K-P-[EQ]-[GR]-[PR]-[PR]-P-Q-G-G-N-Q-[PS]-[QH]-[RG]-[PT]-P-P-[PH]-P-G. The segment covering 48 to 63 (QRPPPPPGKPQGPPPQ) has biased composition (pro residues). N-linked (GlcNAc...) asparagine glycosylation is found at asparagine 66, asparagine 87, and asparagine 108. A compositionally biased stretch (pro residues) spans 133–147 (GPPPTPGKPEGPPPQ). Asparagine 150, asparagine 171, and asparagine 192 each carry an N-linked (GlcNAc...) asparagine glycan. Residues 196 to 210 (RPPPPPGKPERPPPQ) are compositionally biased toward pro residues. N-linked (GlcNAc...) asparagine glycosylation is present at asparagine 213. Over residues 217–231 (GPPPHPGKPEGPPPQ) the composition is skewed to pro residues. The 10; truncated repeat unit spans residues 224 to 234 (KPEGPPPQEGN). A glycan (N-linked (GlcNAc...) asparagine) is linked at asparagine 234. Residues 258–310 (QGPPPPGKPQGPPPAGGNPQQPQAPPAGKPQGPPPPPQGGRPPRPAQGQQPPQ) are compositionally biased toward pro residues.

N-glycosylated. Post-translationally, proteolytically cleaved at the tripeptide Xaa-Pro-Gln, where Xaa in the P(3) position is mostly lysine. The endoprotease may be of microbial origin. Pyroglutamate formation found on at least Gln-46, Gln-48, Gln-67, Gln-88; Gln-90; Gln-193; Gln-288 Gln-214 and Gln-295, preferentially in diabetic, and head and neck cancer patients.

The protein localises to the secreted. The polypeptide is Basic salivary proline-rich protein 4 (PRB4) (Homo sapiens (Human)).